The following is a 138-amino-acid chain: Small ribosomal subunit protein uS11c (138 aa).

The interval methionine 1–arginine 24 is disordered. Residues glycine 9–arginine 24 show a composition bias toward basic residues.

Belongs to the universal ribosomal protein uS11 family. Part of the 30S ribosomal subunit.

The protein localises to the plastid. It is found in the chloroplast. In Chloranthus spicatus (Chulantree), this protein is Small ribosomal subunit protein uS11c.